A 101-amino-acid polypeptide reads, in one-letter code: Phosphoribosyl-AMP cyclohydrolase (101 aa).

Mg(2+) is bound at residue Asp-71. Residue Cys-72 coordinates Zn(2+). The Mg(2+) site is built by Asp-73 and Asp-75. Positions 88 and 95 each coordinate Zn(2+).

This sequence belongs to the PRA-CH family. Homodimer. It depends on Mg(2+) as a cofactor. Zn(2+) is required as a cofactor.

Its subcellular location is the cytoplasm. It carries out the reaction 1-(5-phospho-beta-D-ribosyl)-5'-AMP + H2O = 1-(5-phospho-beta-D-ribosyl)-5-[(5-phospho-beta-D-ribosylamino)methylideneamino]imidazole-4-carboxamide. Its pathway is amino-acid biosynthesis; L-histidine biosynthesis; L-histidine from 5-phospho-alpha-D-ribose 1-diphosphate: step 3/9. Functionally, catalyzes the hydrolysis of the adenine ring of phosphoribosyl-AMP. In Bacillus cereus (strain 03BB102), this protein is Phosphoribosyl-AMP cyclohydrolase.